A 120-amino-acid polypeptide reads, in one-letter code: Movement protein TGB2 (120 aa).

The Cytoplasmic segment spans residues M1 to D8. A helical membrane pass occupies residues Y9–L29. Topologically, residues T30–L71 are lumenal. A helical transmembrane segment spans residues I72–V92. Topologically, residues S93–E120 are cytoplasmic.

This sequence belongs to the Tymovirales TGBp2 protein family.

The protein localises to the host endoplasmic reticulum membrane. Plays a role in viral cell-to-cell propagation, by facilitating genome transport to neighboring plant cells through plasmosdesmata,. The chain is Movement protein TGB2 from Crataegus (hawthorn).